The primary structure comprises 402 residues: mRNA-capping enzyme subunit alpha (402 aa).

Lys67 functions as the N6-GMP-lysine intermediate in the catalytic mechanism. Residues 374 to 402 (SVTKRKLDETSNDDAPAIKKVAKESEKEI) form a disordered region.

The protein belongs to the eukaryotic GTase family. As to quaternary structure, heterodimer. The mRNA-capping enzyme is composed of two separate chains alpha and beta, respectively a mRNA guanylyltransferase and an mRNA 5'-triphosphate monophosphatase.

It localises to the nucleus. The enzyme catalyses a 5'-end diphospho-ribonucleoside in mRNA + GTP + H(+) = a 5'-end (5'-triphosphoguanosine)-ribonucleoside in mRNA + diphosphate. In terms of biological role, second step of mRNA capping. Transfer of the GMP moiety of GTP to the 5'-end of RNA via an enzyme-GMP covalent reaction intermediate. The protein is mRNA-capping enzyme subunit alpha (ceg1) of Schizosaccharomyces pombe (strain 972 / ATCC 24843) (Fission yeast).